The sequence spans 149 residues: Pleckstrin homology domain-containing family J member 1 (149 aa).

Residues 15-108 form the PH domain; sequence RAEKAAELSM…WVEALTNASY (94 aa).

In Xenopus tropicalis (Western clawed frog), this protein is Pleckstrin homology domain-containing family J member 1 (plekhj1).